The sequence spans 206 residues: Ribosomal RNA large subunit methyltransferase E (206 aa).

S-adenosyl-L-methionine-binding residues include glycine 60, tryptophan 62, aspartate 80, aspartate 96, and aspartate 121. Lysine 161 serves as the catalytic Proton acceptor.

It belongs to the class I-like SAM-binding methyltransferase superfamily. RNA methyltransferase RlmE family.

It is found in the cytoplasm. It carries out the reaction uridine(2552) in 23S rRNA + S-adenosyl-L-methionine = 2'-O-methyluridine(2552) in 23S rRNA + S-adenosyl-L-homocysteine + H(+). In terms of biological role, specifically methylates the uridine in position 2552 of 23S rRNA at the 2'-O position of the ribose in the fully assembled 50S ribosomal subunit. This Saccharophagus degradans (strain 2-40 / ATCC 43961 / DSM 17024) protein is Ribosomal RNA large subunit methyltransferase E.